We begin with the raw amino-acid sequence, 519 residues long: MLRSLHSAATLSNKRFYSLISHSNRKNIIKKLLRHPSFDPIRHHLPEDITTIDPYSLSQNVIESLNKLEVPKKDAAMVHNMMIENLSDLDYGVATIHSNNLRDLDLKPSLPAIKQIIRNNPGRVQSSWELFTQYKASMENVPDELMEVVLEKIIKFDKAEKVDGKKSLTYQDLVRCLYLINHFSSNYNLPSELVEPILIYIVDNGIPNVLGSVLKYKIPLSFFDKYVSEMTQYQICELYDFYSLDNIVADPLVLHKCLTVLGENEKIQQTEEEKEIISKLEEEIDIVKSQCHDNWSLEFPNWSVRKTATSFEELFLEIQKRNIDKKDFELAHKLLRLIGAFKGKVSLFFKLYDEYLLKFKNNEDDLMFEAFLTLCCQGYKSSNEKMLQYAEAFIKEDFDSKLESKIQSVLIVANAKANIDLSLKIYNSNISTAKREKDKYTDLAESDVLTESLILAFLSRDDADFARVIFDGALGEKLISGPTAAKKIKNLLAQYGEALETKTSKQVMQTKIEHYMESI.

The N-terminal 35 residues, 1–35, are a transit peptide targeting the mitochondrion; sequence MLRSLHSAATLSNKRFYSLISHSNRKNIIKKLLRH.

In terms of assembly, associates with the mitochondrial ribosome.

It is found in the mitochondrion. In terms of biological role, component of MIOREX complexes, large expressome-like assemblies of ribosomes with factors involved in all the steps of post-transcriptional gene expression. This chain is MIOREX complex component 12, found in Saccharomyces cerevisiae (strain ATCC 204508 / S288c) (Baker's yeast).